We begin with the raw amino-acid sequence, 249 residues long: NAD kinase (249 aa).

Residue Asp49 is the Proton acceptor of the active site. NAD(+) is bound by residues 49 to 50 (DG), Arg54, 115 to 116 (NE), Lys126, Arg143, Asp145, Ile153, 156 to 161 (TGYAFS), Ala180, and Gln211.

This sequence belongs to the NAD kinase family. In terms of assembly, homotetramer. A divalent metal cation serves as cofactor.

The protein resides in the cytoplasm. It catalyses the reaction NAD(+) + ATP = ADP + NADP(+) + H(+). Its function is as follows. Involved in the regulation of the intracellular balance between NAD(H) and NADP(H), and is a key enzyme in the biosynthesis of NADP. Catalyzes specifically the phosphorylation on 2'-hydroxyl of the adenosine moiety of NAD to yield NADP. In Archaeoglobus fulgidus (strain ATCC 49558 / DSM 4304 / JCM 9628 / NBRC 100126 / VC-16), this protein is NAD kinase.